The sequence spans 195 residues: Large ribosomal subunit protein uL5 (195 aa).

Residues 1–25 (MARVPPPALKKDKKEKKPPKDNSKN) are disordered.

This sequence belongs to the universal ribosomal protein uL5 family. In terms of assembly, component of the large ribosomal subunit.

The protein localises to the nucleus. Its subcellular location is the cytoplasm. Its function is as follows. Component of the ribosome, a large ribonucleoprotein complex responsible for the synthesis of proteins in the cell. The small ribosomal subunit (SSU) binds messenger RNAs (mRNAs) and translates the encoded message by selecting cognate aminoacyl-transfer RNA (tRNA) molecules. The large subunit (LSU) contains the ribosomal catalytic site termed the peptidyl transferase center (PTC), which catalyzes the formation of peptide bonds, thereby polymerizing the amino acids delivered by tRNAs into a polypeptide chain. The nascent polypeptides leave the ribosome through a tunnel in the LSU and interact with protein factors that function in enzymatic processing, targeting, and the membrane insertion of nascent chains at the exit of the ribosomal tunnel. This chain is Large ribosomal subunit protein uL5 (RpL11), found in Spodoptera frugiperda (Fall armyworm).